Here is a 290-residue protein sequence, read N- to C-terminus: Phosphatidylglycerol--prolipoprotein diacylglyceryl transferase (290 aa).

A run of 7 helical transmembrane segments spans residues 21-41 (VSLHWYGLMYLVGFVFAMWLA), 60-80 (LLYAGFLGVFLGGRIGYVLFY), 98-118 (GGMSFHGGLIGVIVVMLWFAH), 124-144 (FFQVADFVAPMVPFGLGAGRL), 198-218 (SQLYEMLLEGVVLFIILNLFI), 224-244 (IGSVSGLFLICYGAFRILVEF), and 258-278 (VISMGQILSLPMILAGVIMMA). Arg143 provides a ligand contact to a 1,2-diacyl-sn-glycero-3-phospho-(1'-sn-glycerol).

The protein belongs to the Lgt family.

The protein resides in the cell inner membrane. The enzyme catalyses L-cysteinyl-[prolipoprotein] + a 1,2-diacyl-sn-glycero-3-phospho-(1'-sn-glycerol) = an S-1,2-diacyl-sn-glyceryl-L-cysteinyl-[prolipoprotein] + sn-glycerol 1-phosphate + H(+). It participates in protein modification; lipoprotein biosynthesis (diacylglyceryl transfer). In terms of biological role, catalyzes the transfer of the diacylglyceryl group from phosphatidylglycerol to the sulfhydryl group of the N-terminal cysteine of a prolipoprotein, the first step in the formation of mature lipoproteins. This chain is Phosphatidylglycerol--prolipoprotein diacylglyceryl transferase, found in Sodalis glossinidius (strain morsitans).